A 62-amino-acid polypeptide reads, in one-letter code: MSKTIVRKNESLDDALRRFKRTVSRNGTLQEYRKREFYEKPSVKRKLKSEAARKRKNKRRRY.

Positions 40-52 are enriched in basic and acidic residues; that stretch reads KPSVKRKLKSEAA. Residues 40 to 62 are disordered; sequence KPSVKRKLKSEAARKRKNKRRRY. Residues 53-62 are compositionally biased toward basic residues; sequence RKRKNKRRRY.

The protein belongs to the bacterial ribosomal protein bS21 family.

The protein is Small ribosomal subunit protein bS21 of Limosilactobacillus fermentum (strain NBRC 3956 / LMG 18251) (Lactobacillus fermentum).